Here is a 484-residue protein sequence, read N- to C-terminus: Protein nucleotidyltransferase YdiU (484 aa).

Residues G81, G83, R84, K103, D115, G116, R166, and R173 each contribute to the ATP site. The active-site Proton acceptor is the D244. 2 residues coordinate Mg(2+): N245 and D254. D254 is an ATP binding site.

The protein belongs to the SELO family. The cofactor is Mg(2+). Requires Mn(2+) as cofactor.

The enzyme catalyses L-seryl-[protein] + ATP = 3-O-(5'-adenylyl)-L-seryl-[protein] + diphosphate. It carries out the reaction L-threonyl-[protein] + ATP = 3-O-(5'-adenylyl)-L-threonyl-[protein] + diphosphate. The catalysed reaction is L-tyrosyl-[protein] + ATP = O-(5'-adenylyl)-L-tyrosyl-[protein] + diphosphate. It catalyses the reaction L-histidyl-[protein] + UTP = N(tele)-(5'-uridylyl)-L-histidyl-[protein] + diphosphate. The enzyme catalyses L-seryl-[protein] + UTP = O-(5'-uridylyl)-L-seryl-[protein] + diphosphate. It carries out the reaction L-tyrosyl-[protein] + UTP = O-(5'-uridylyl)-L-tyrosyl-[protein] + diphosphate. In terms of biological role, nucleotidyltransferase involved in the post-translational modification of proteins. It can catalyze the addition of adenosine monophosphate (AMP) or uridine monophosphate (UMP) to a protein, resulting in modifications known as AMPylation and UMPylation. The polypeptide is Protein nucleotidyltransferase YdiU (Shewanella baltica (strain OS185)).